Reading from the N-terminus, the 339-residue chain is Basic membrane protein A (339 aa).

The signal sequence occupies residues 1–17 (MNKILLLILLESIVFLS). The N-palmitoyl cysteine moiety is linked to residue cysteine 18. Cysteine 18 carries the S-diacylglycerol cysteine lipid modification.

The protein belongs to the BMP lipoprotein family. As to quaternary structure, monomer.

The protein resides in the cell inner membrane. In terms of biological role, immunogenic protein. May be part of an ABC-type nucleoside uptake system involved in the purine salvage pathway. The polypeptide is Basic membrane protein A (bmpA) (Borreliella burgdorferi (strain ATCC 35210 / DSM 4680 / CIP 102532 / B31) (Borrelia burgdorferi)).